The chain runs to 140 residues: DegV domain-containing 15.5 kDa protein (140 aa).

The DegV domain maps to 4–140; it reads QIIVTDSTSD…ELVLLQSKKI (137 aa). Positions 61 and 93 each coordinate hexadecanoate.

In terms of biological role, may bind long-chain fatty acids, such as palmitate, and may play a role in lipid transport or fatty acid metabolism. The polypeptide is DegV domain-containing 15.5 kDa protein (Staphylococcus aureus).